Reading from the N-terminus, the 149-residue chain is Prefoldin subunit alpha (149 aa).

This sequence belongs to the prefoldin subunit alpha family. Heterohexamer of two alpha and four beta subunits.

It localises to the cytoplasm. Functionally, molecular chaperone capable of stabilizing a range of proteins. Seems to fulfill an ATP-independent, HSP70-like function in archaeal de novo protein folding. This is Prefoldin subunit alpha from Methanospirillum hungatei JF-1 (strain ATCC 27890 / DSM 864 / NBRC 100397 / JF-1).